Consider the following 364-residue polypeptide: UDP-N-acetylglucosamine--N-acetylmuramyl-(pentapeptide) pyrophosphoryl-undecaprenol N-acetylglucosamine transferase (364 aa).

UDP-N-acetyl-alpha-D-glucosamine contacts are provided by residues Thr-10–Gly-12, Asn-124, Arg-166, Ser-196, and Gln-297.

The protein belongs to the glycosyltransferase 28 family. MurG subfamily.

The protein resides in the cell membrane. It catalyses the reaction di-trans,octa-cis-undecaprenyl diphospho-N-acetyl-alpha-D-muramoyl-L-alanyl-D-glutamyl-meso-2,6-diaminopimeloyl-D-alanyl-D-alanine + UDP-N-acetyl-alpha-D-glucosamine = di-trans,octa-cis-undecaprenyl diphospho-[N-acetyl-alpha-D-glucosaminyl-(1-&gt;4)]-N-acetyl-alpha-D-muramoyl-L-alanyl-D-glutamyl-meso-2,6-diaminopimeloyl-D-alanyl-D-alanine + UDP + H(+). The protein operates within cell wall biogenesis; peptidoglycan biosynthesis. Cell wall formation. Catalyzes the transfer of a GlcNAc subunit on undecaprenyl-pyrophosphoryl-MurNAc-pentapeptide (lipid intermediate I) to form undecaprenyl-pyrophosphoryl-MurNAc-(pentapeptide)GlcNAc (lipid intermediate II). This is UDP-N-acetylglucosamine--N-acetylmuramyl-(pentapeptide) pyrophosphoryl-undecaprenol N-acetylglucosamine transferase from Caldanaerobacter subterraneus subsp. tengcongensis (strain DSM 15242 / JCM 11007 / NBRC 100824 / MB4) (Thermoanaerobacter tengcongensis).